Reading from the N-terminus, the 167-residue chain is U-scoloptoxin(08)-Er5a (167 aa).

Residues Met1–Gly22 form the signal peptide. Residues Glu23–Arg94 constitute a propeptide that is removed on maturation. RLWRNWE repeat units follow at residues Arg34–Glu40, Arg61–Glu67, and Arg86–Glu92. Position 95 is a pyrrolidone carboxylic acid (Gln95). The RLWRNWE 4; approximate repeat unit spans residues Glu107–Glu113. Positions Trp112–Arg118 are excised as a propeptide. Gln119 carries the post-translational modification Pyrrolidone carboxylic acid. Residues Arg134–Glu140 form an RLWRNWE 5 repeat. The propeptide occupies Trp139 to Glu167. The segment at Arg147–Glu167 is disordered.

It belongs to the scoloptoxin-08 family. In terms of tissue distribution, expressed by the venom gland.

The protein localises to the secreted. This Ethmostigmus rubripes (Giant centipede) protein is U-scoloptoxin(08)-Er5a.